Here is a 334-residue protein sequence, read N- to C-terminus: Biotin synthase (334 aa).

Residues 41 to 260 (TRLETASLLS…IAVARIMMPR (220 aa)) enclose the Radical SAM core domain. [4Fe-4S] cluster-binding residues include cysteine 56, cysteine 60, and cysteine 63. Cysteine 100, cysteine 131, cysteine 191, and arginine 264 together coordinate [2Fe-2S] cluster.

Belongs to the radical SAM superfamily. Biotin synthase family. In terms of assembly, homodimer. Requires [4Fe-4S] cluster as cofactor. The cofactor is [2Fe-2S] cluster.

It carries out the reaction (4R,5S)-dethiobiotin + (sulfur carrier)-SH + 2 reduced [2Fe-2S]-[ferredoxin] + 2 S-adenosyl-L-methionine = (sulfur carrier)-H + biotin + 2 5'-deoxyadenosine + 2 L-methionine + 2 oxidized [2Fe-2S]-[ferredoxin]. It functions in the pathway cofactor biosynthesis; biotin biosynthesis; biotin from 7,8-diaminononanoate: step 2/2. Its function is as follows. Catalyzes the conversion of dethiobiotin (DTB) to biotin by the insertion of a sulfur atom into dethiobiotin via a radical-based mechanism. The sequence is that of Biotin synthase from Bradyrhizobium sp. (strain ORS 278).